A 441-amino-acid chain; its full sequence is Interferon-related developmental regulator 2 (441 aa).

Residues 1-15 (MPRARKGNALRKGGQ) show a composition bias toward basic residues. Positions 1–51 (MPRARKGNALRKGGQRRGGGARSSTQADSGSSEDEAASEARSTTSDCPSLL) are disordered.

This sequence belongs to the IFRD family. Associates with ribosomes; promoting ribosome inactivation.

Its function is as follows. Ribosome-binding protein that acts as an inhibitor of mRNA translation by promoting ribosome inactivation. Associates with the P- and E-sites of the ribosome and inserts a C-terminal helix into the mRNA exit channel to preclude translation. This is Interferon-related developmental regulator 2 from Mus musculus (Mouse).